Here is a 559-residue protein sequence, read N- to C-terminus: CCR4-NOT transcription complex subunit 6-like (559 aa).

A required for interaction with cnot1, cnot3 and cnot7 region spans residues 1-148 (MPKEKYDPPD…LYQEPDGTRK (148 aa)). The segment at 1-550 (MPKEKYDPPD…NGLHLPVHST (550 aa)) is nuclease domain. LRR repeat units follow at residues 52-73 (HLTA…IAKL), 75-96 (HLVY…LGNM), 98-120 (TLRE…GRLF), and 121-143 (QLQT…YQEP). E235 contacts Mg(2+). 4 residues coordinate substrate: E235, E271, H353, and P358. D405 lines the Mg(2+) pocket. Catalysis depends on D405, which acts as the Proton donor/acceptor. The substrate site is built by N407, N474, and F479.

It belongs to the CCR4/nocturin family. In terms of assembly, component of the CCR4-NOT complex. Requires Mg(2+) as cofactor.

It localises to the cytoplasm. The protein resides in the nucleus. It catalyses the reaction Exonucleolytic cleavage of poly(A) to 5'-AMP.. In terms of biological role, poly(A) nuclease with 3'-5' RNase activity. Catalytic component of the CCR4-NOT complex which is one of the major cellular mRNA deadenylases and is linked to various cellular processes including bulk mRNA degradation, miRNA-mediated repression, translational repression during translational initiation and general transcription regulation. Additional complex functions may be a consequence of its influence on mRNA expression. The polypeptide is CCR4-NOT transcription complex subunit 6-like (cnot6l) (Danio rerio (Zebrafish)).